A 296-amino-acid chain; its full sequence is Ribosomal RNA small subunit methyltransferase H (296 aa).

S-adenosyl-L-methionine contacts are provided by residues 41–43 (GGY), aspartate 59, phenylalanine 86, aspartate 104, and glutamine 111.

Belongs to the methyltransferase superfamily. RsmH family.

Its subcellular location is the cytoplasm. The enzyme catalyses cytidine(1402) in 16S rRNA + S-adenosyl-L-methionine = N(4)-methylcytidine(1402) in 16S rRNA + S-adenosyl-L-homocysteine + H(+). In terms of biological role, specifically methylates the N4 position of cytidine in position 1402 (C1402) of 16S rRNA. The protein is Ribosomal RNA small subunit methyltransferase H of Neorickettsia sennetsu (strain ATCC VR-367 / Miyayama) (Ehrlichia sennetsu).